The primary structure comprises 440 residues: Probable carboxypeptidase AFUB_072730 (440 aa).

Positions 1 to 16 (MKPLTSLLLSAALSAA) are cleaved as a signal peptide. 2 N-linked (GlcNAc...) asparagine glycosylation sites follow: Asn-87 and Asn-149. Asp-165 serves as a coordination point for Zn(2+). Catalysis depends on Glu-197, which acts as the Proton acceptor. Glu-198 lines the Zn(2+) pocket. Asn-353 and Asn-372 each carry an N-linked (GlcNAc...) asparagine glycan.

The protein belongs to the peptidase M20A family. Zn(2+) serves as cofactor.

It is found in the secreted. This is Probable carboxypeptidase AFUB_072730 from Aspergillus fumigatus (strain CBS 144.89 / FGSC A1163 / CEA10) (Neosartorya fumigata).